Here is a 305-residue protein sequence, read N- to C-terminus: GMP synthase [glutamine-hydrolyzing] subunit B (305 aa).

The GMPS ATP-PPase domain maps to 2 to 185 (VETEEFIAEA…LGLEEVISER (184 aa)). 29–35 (SGGVDSS) serves as a coordination point for ATP.

In terms of assembly, heterodimer composed of a glutamine amidotransferase subunit (A) and a GMP-binding subunit (B).

The enzyme catalyses XMP + L-glutamine + ATP + H2O = GMP + L-glutamate + AMP + diphosphate + 2 H(+). It participates in purine metabolism; GMP biosynthesis; GMP from XMP (L-Gln route): step 1/1. Its function is as follows. Catalyzes the synthesis of GMP from XMP. This chain is GMP synthase [glutamine-hydrolyzing] subunit B, found in Halorubrum lacusprofundi (strain ATCC 49239 / DSM 5036 / JCM 8891 / ACAM 34).